We begin with the raw amino-acid sequence, 700 residues long: Non-hemolytic phospholipase C (700 aa).

Positions 1–34 (MTNQNRRDFLRLAAGTAGAAALQLFPPVIREALA) form a signal peptide, tat-type signal.

It belongs to the bacterial phospholipase C family. Predicted to be exported by the Tat system. The position of the signal peptide cleavage has not been experimentally proven.

It catalyses the reaction a 1,2-diacyl-sn-glycero-3-phosphocholine + H2O = phosphocholine + a 1,2-diacyl-sn-glycerol + H(+). Functionally, hydrolyzes phosphatidylserine as well as phosphatidylcholine. The sequence is that of Non-hemolytic phospholipase C (plcN) from Burkholderia pseudomallei (strain K96243).